Reading from the N-terminus, the 358-residue chain is Endo-1,4-beta-xylanase B (358 aa).

A signal peptide spans 1–17; it reads MRFSASLLLALTGSAAA. Residues 40-352 form the GH10 domain; the sequence is QGLDAAMKAA…KAAYNAFLRG (313 aa). An N-linked (GlcNAc...) asparagine glycan is attached at asparagine 136. The Proton donor role is filled by glutamate 166. The Nucleophile role is filled by glutamate 274.

The protein belongs to the glycosyl hydrolase 10 (cellulase F) family.

Its subcellular location is the secreted. The enzyme catalyses Endohydrolysis of (1-&gt;4)-beta-D-xylosidic linkages in xylans.. Its pathway is glycan degradation; xylan degradation. With respect to regulation, partial inhibition of activity is detected in the presence of Ag(+), Cu2(+) and SDS. Like most fungal xylanases, activity is completely inhibited by Hg(2+) since Hg(2+) could interact with tryptophan residues and oxidize the indole ring. Beta-mercaptoethanol enhances the enzymatic activity by counteracting the oxidation effects of the S-S linkage between cysteine residues. In terms of biological role, endo-1,4-beta-xylanase involved in the hydrolysis of xylan, a major structural heterogeneous polysaccharide found in plant biomass representing the second most abundant polysaccharide in the biosphere, after cellulose. Is more active on soluble wheat arabinoxylan (defined as 100%) than on birchwood xylan (75.4%) and beechwood xylan (70.8%), and less active on insoluble wheat arabinoxylan (17.4%). Xylose is the major hydrolysis product of XynB. The polypeptide is Endo-1,4-beta-xylanase B (Humicola insolens (Soft-rot fungus)).